The sequence spans 956 residues: DNA replication helicase (956 aa).

120–127 (GTAGAGKT) provides a ligand contact to ATP. The interval 658–694 (PINNHVDADSSQGGQSVPVSQRMEHGQEETHDIPCLS) is disordered. Low complexity predominate over residues 667 to 678 (SSQGGQSVPVSQ). Basic and acidic residues predominate over residues 679-694 (RMEHGQEETHDIPCLS).

Belongs to the herpesviridae helicase family. In terms of assembly, associates with the primase and the primase-associated factor to form the helicase-primase complex.

The protein localises to the host nucleus. Component of the helicase/primase complex. Unwinds the DNA at the replication forks and generates single-stranded DNA for both leading and lagging strand synthesis. The primase synthesizes short RNA primers on the lagging strand that the polymerase elongates using dNTPs. Possesses helicase-like motifs and therefore may act as the helicase subunit of the complex. The chain is DNA replication helicase from Human cytomegalovirus (strain AD169) (HHV-5).